Reading from the N-terminus, the 503-residue chain is Alpha-1B-glycoprotein (503 aa).

The first 21 residues, 1–21, serve as a signal peptide directing secretion; sequence MSAWAALLLLWGLSLSPVTEQ. 5 Ig-like V-type domains span residues 27-115, 117-204, 208-305, 307-405, and 406-501; these read PRPS…EVTG, EPLP…TVTI, DPPP…LVLS, GTLP…LRVD, and GPLP…LRVA. Cysteines 49 and 96 form a disulfide. Asn-137 and Asn-182 each carry an N-linked (GlcNAc...) asparagine glycan. Disulfide bonds link Cys-142–Cys-185, Cys-235–Cys-282, Cys-333–Cys-382, and Cys-431–Cys-478. N-linked (GlcNAc...) asparagine glycosylation is present at Asn-379.

As to quaternary structure, interacts with CRISP3. In terms of tissue distribution, plasma.

Its subcellular location is the secreted. The chain is Alpha-1B-glycoprotein from Bos taurus (Bovine).